Consider the following 149-residue polypeptide: Acyl carrier protein 1, chloroplastic (149 aa).

Residues 1-59 constitute a chloroplast transit peptide; it reads MAHCLAAVSSFSPSAVRRRLSSQVANVVSSRSSVSFHSRQMSFVSISSRPSSLRFKICC. The Carrier domain maps to 69 to 144; the sequence is KETVDKVCMI…DAANLIEKLV (76 aa). Ser-104 carries the post-translational modification O-(pantetheine 4'-phosphoryl)serine.

This sequence belongs to the acyl carrier protein (ACP) family. In terms of processing, 4'-phosphopantetheine is transferred from CoA to a specific serine of apo-ACP by acpS. This modification is essential for activity because fatty acids are bound in thioester linkage to the sulfhydryl of the prosthetic group.

Its subcellular location is the plastid. The protein resides in the chloroplast. It participates in lipid metabolism; fatty acid biosynthesis. In terms of biological role, carrier of the growing fatty acid chain in fatty acid biosynthesis. The chain is Acyl carrier protein 1, chloroplastic (ACL1.1) from Hordeum vulgare (Barley).